A 364-amino-acid chain; its full sequence is tRNA 2-selenouridine synthase (364 aa).

The Rhodanese domain maps to leucine 14 to isoleucine 137. Residue cysteine 97 is the S-selanylcysteine intermediate of the active site.

It belongs to the SelU family. In terms of assembly, monomer.

The catalysed reaction is 5-methylaminomethyl-2-thiouridine(34) in tRNA + selenophosphate + (2E)-geranyl diphosphate + H2O + H(+) = 5-methylaminomethyl-2-selenouridine(34) in tRNA + (2E)-thiogeraniol + phosphate + diphosphate. It carries out the reaction 5-methylaminomethyl-2-thiouridine(34) in tRNA + (2E)-geranyl diphosphate = 5-methylaminomethyl-S-(2E)-geranyl-thiouridine(34) in tRNA + diphosphate. The enzyme catalyses 5-methylaminomethyl-S-(2E)-geranyl-thiouridine(34) in tRNA + selenophosphate + H(+) = 5-methylaminomethyl-2-(Se-phospho)selenouridine(34) in tRNA + (2E)-thiogeraniol. It catalyses the reaction 5-methylaminomethyl-2-(Se-phospho)selenouridine(34) in tRNA + H2O = 5-methylaminomethyl-2-selenouridine(34) in tRNA + phosphate. Its function is as follows. Involved in the post-transcriptional modification of the uridine at the wobble position (U34) of tRNA(Lys), tRNA(Glu) and tRNA(Gln). Catalyzes the conversion of 2-thiouridine (S2U-RNA) to 2-selenouridine (Se2U-RNA). Acts in a two-step process involving geranylation of 2-thiouridine (S2U) to S-geranyl-2-thiouridine (geS2U) and subsequent selenation of the latter derivative to 2-selenouridine (Se2U) in the tRNA chain. This chain is tRNA 2-selenouridine synthase, found in Shigella boydii serotype 18 (strain CDC 3083-94 / BS512).